The chain runs to 191 residues: Negative modulator of initiation of replication (191 aa).

Residues 96–97 (AV) form an interaction with DNA region.

The protein belongs to the SeqA family. In terms of assembly, homodimer. Polymerizes to form helical filaments.

It localises to the cytoplasm. Negative regulator of replication initiation, which contributes to regulation of DNA replication and ensures that replication initiation occurs exactly once per chromosome per cell cycle. Binds to pairs of hemimethylated GATC sequences in the oriC region, thus preventing assembly of replication proteins and re-initiation at newly replicated origins. Repression is relieved when the region becomes fully methylated. This chain is Negative modulator of initiation of replication, found in Shewanella amazonensis (strain ATCC BAA-1098 / SB2B).